The chain runs to 346 residues: MRPIMLMGHERSLTQVKYNREGDLIFTSGKDNVASVWYAMNGERLGTLEGHNGSIWSIDVDQHTEYAVTGSADFSVKVWRVRDGSIAHSWDTRTPVRRVEFSPTGDRVLAVLDNVMNYAGAIVVFSVTRDANNQITGFNSGLSCEILTQEGCAPVLVASWSYDGKYIVAGHQDGKISKYNGVTGECLEIKDLHKQRVSDIQFSLDRTYFLTTSRDSYANLVDVETFEVLKTYETDCPLNSGCITPLKEFVILGGGQDARDVTTTSAREGKFEAKFYHKLFQVEIGRVDDHFGPVNYIAVSPQGTSYASGGEDGFVRLHHFDKSYFDFKFDVEKSADAQKKVDTADR.

WD repeat units lie at residues Gly-8 to Thr-47, Gly-50 to Ser-89, Glu-150 to Ile-189, Leu-192 to Glu-233, and Asp-289 to Lys-328.

The protein belongs to the eIF-3 subunit I family. In terms of assembly, component of the eukaryotic translation initiation factor 3 (eIF-3) complex.

It localises to the cytoplasm. Its function is as follows. Component of the eukaryotic translation initiation factor 3 (eIF-3) complex, which is involved in protein synthesis of a specialized repertoire of mRNAs and, together with other initiation factors, stimulates binding of mRNA and methionyl-tRNAi to the 40S ribosome. The eIF-3 complex specifically targets and initiates translation of a subset of mRNAs involved in cell proliferation. This Eremothecium gossypii (strain ATCC 10895 / CBS 109.51 / FGSC 9923 / NRRL Y-1056) (Yeast) protein is Eukaryotic translation initiation factor 3 subunit I.